Consider the following 71-residue polypeptide: Large ribosomal subunit protein bL31 (71 aa).

Residues cysteine 16, cysteine 18, cysteine 36, and cysteine 39 each coordinate Zn(2+).

This sequence belongs to the bacterial ribosomal protein bL31 family. Type A subfamily. In terms of assembly, part of the 50S ribosomal subunit. Zn(2+) is required as a cofactor.

Its function is as follows. Binds the 23S rRNA. In Pseudothermotoga lettingae (strain ATCC BAA-301 / DSM 14385 / NBRC 107922 / TMO) (Thermotoga lettingae), this protein is Large ribosomal subunit protein bL31.